The primary structure comprises 450 residues: 23S rRNA (uracil(1939)-C(5))-methyltransferase RlmD (450 aa).

In terms of domain architecture, TRAM spans 1–62 (MPVAGPLDIV…PSYEQAGVVN (62 aa)). [4Fe-4S] cluster contacts are provided by C75, C81, C84, and C163. Positions 271, 300, 305, 321, 349, and 370 each coordinate S-adenosyl-L-methionine. Catalysis depends on C406, which acts as the Nucleophile.

It belongs to the class I-like SAM-binding methyltransferase superfamily. RNA M5U methyltransferase family. RlmD subfamily.

The catalysed reaction is uridine(1939) in 23S rRNA + S-adenosyl-L-methionine = 5-methyluridine(1939) in 23S rRNA + S-adenosyl-L-homocysteine + H(+). Its function is as follows. Catalyzes the formation of 5-methyl-uridine at position 1939 (m5U1939) in 23S rRNA. This Ralstonia pickettii (strain 12J) protein is 23S rRNA (uracil(1939)-C(5))-methyltransferase RlmD.